The following is a 237-amino-acid chain: MKSLSFLNHEFEAFPSPELALTDPNGLLAIGGDLRPERLLSAYYNGIFPWFNSDDPILWWSPDPRAVFIPGEIHISTSLRKYLKKQPWRITINHAFTDVMAGCAQPREKQSGTWITQEIQMAYRELHHTGHAHSIEVWEGERLIGGLYGLAIGQVFCGESMFHRKTNASKAAVAALQQHLLKMGFKLIDAQVMNPHLESLGAKAIKRIDFITLLSELRNNPVDPTTWTTKEVILELE.

The protein belongs to the L/F-transferase family.

The protein resides in the cytoplasm. The catalysed reaction is N-terminal L-lysyl-[protein] + L-leucyl-tRNA(Leu) = N-terminal L-leucyl-L-lysyl-[protein] + tRNA(Leu) + H(+). The enzyme catalyses N-terminal L-arginyl-[protein] + L-leucyl-tRNA(Leu) = N-terminal L-leucyl-L-arginyl-[protein] + tRNA(Leu) + H(+). It carries out the reaction L-phenylalanyl-tRNA(Phe) + an N-terminal L-alpha-aminoacyl-[protein] = an N-terminal L-phenylalanyl-L-alpha-aminoacyl-[protein] + tRNA(Phe). In terms of biological role, functions in the N-end rule pathway of protein degradation where it conjugates Leu, Phe and, less efficiently, Met from aminoacyl-tRNAs to the N-termini of proteins containing an N-terminal arginine or lysine. This chain is Leucyl/phenylalanyl-tRNA--protein transferase, found in Shewanella baltica (strain OS155 / ATCC BAA-1091).